A 258-amino-acid chain; its full sequence is Regulatory protein RecX (258 aa).

Belongs to the RecX family.

It localises to the cytoplasm. In terms of biological role, modulates RecA activity. This Streptococcus pneumoniae (strain Hungary19A-6) protein is Regulatory protein RecX.